The following is a 153-amino-acid chain: ATP synthase subunit b' (153 aa).

A helical transmembrane segment spans residues 23 to 40 (LMAIQVVALTYILNSLFF).

Belongs to the ATPase B chain family. As to quaternary structure, F-type ATPases have 2 components, F(1) - the catalytic core - and F(0) - the membrane proton channel. F(1) has five subunits: alpha(3), beta(3), gamma(1), delta(1), epsilon(1). F(0) has four main subunits: a(1), b(1), b'(1) and c(10-14). The alpha and beta chains form an alternating ring which encloses part of the gamma chain. F(1) is attached to F(0) by a central stalk formed by the gamma and epsilon chains, while a peripheral stalk is formed by the delta, b and b' chains.

The protein resides in the cellular thylakoid membrane. Its function is as follows. F(1)F(0) ATP synthase produces ATP from ADP in the presence of a proton or sodium gradient. F-type ATPases consist of two structural domains, F(1) containing the extramembraneous catalytic core and F(0) containing the membrane proton channel, linked together by a central stalk and a peripheral stalk. During catalysis, ATP synthesis in the catalytic domain of F(1) is coupled via a rotary mechanism of the central stalk subunits to proton translocation. Functionally, component of the F(0) channel, it forms part of the peripheral stalk, linking F(1) to F(0). The b'-subunit is a diverged and duplicated form of b found in plants and photosynthetic bacteria. The protein is ATP synthase subunit b' of Prochlorococcus marinus (strain MIT 9515).